We begin with the raw amino-acid sequence, 266 residues long: MRPRMKYSNSKISPAKFSSTAGEALVPPCKIRRSQQKTKEFCHVYCMRLRSGLTIRKETSYFRKEPTKRYSLKSGTKHEENFSAYPRDSRKRSLLGSIQAFAASVDTLSIQGTSLLTQSPASLSTYNDQSVSFVLENGCYVINVDDSGKDQEQDQVLLRYYESPCPASQSGDGVDGKKLMVNMSPIKDTDIWLHANDKDYSVELQRGDVSPPEQAFFVLHKKSSDFVSFECKNLPGTYIGVKDNQLALVEEKDESCNNIMFKLSKI.

The interval 1-67 (MRPRMKYSNS…ETSYFRKEPT (67 aa)) is homeodomain-like HTH domain. Positions 1 to 101 (MRPRMKYSNS…RSLLGSIQAF (101 aa)) are excised as a propeptide. An interaction with RELA region spans residues 66–108 (PTKRYSLKSGTKHEENFSAYPRDSRKRSLLGSIQAFAASVDTL).

The protein belongs to the IL-1 family. Highly divergent. In terms of assembly, (Microbial infection) Interacts (in reduced form) with H.polygyrus ARI; the interaction abolishes the interaction with its primary receptor IL1RL1. Forms a 1:1:1 heterotrimeric complex with its primary high-affinity receptor IL1RL1 and the coreceptor IL1RAP. Interacts with cargo receptor TMED10; the interaction mediates the translocation from the cytoplasm into the ERGIC (endoplasmic reticulum-Golgi intermediate compartment) and thereby secretion. In terms of processing, the full-length protein can be released from cells and is able to signal via the IL1RL1/ST2 receptor. However, proteolytic processing by CELA1, CSTG/cathepsin G and ELANE/neutrophil elastase produces C-terminal peptides that are more active than the unprocessed full-length protein. May also be proteolytically processed by calpains. Proteolytic cleavage mediated by apoptotic caspases including CASP3 and CASP7 results in IL33 inactivation. In vitro proteolytic cleavage by CASP1 was reported but could not be confirmed in vivo suggesting that IL33 is probably not a direct substrate for that caspase.

It is found in the nucleus. The protein resides in the chromosome. The protein localises to the cytoplasm. Its subcellular location is the cytoplasmic vesicle. It localises to the secretory vesicle. It is found in the secreted. In terms of biological role, cytokine that binds to and signals through the IL1RL1/ST2 receptor which in turn activates NF-kappa-B and MAPK signaling pathways in target cells. Involved in the maturation of Th2 cells inducing the secretion of T-helper type 2-associated cytokines. Also involved in activation of mast cells, basophils, eosinophils and natural killer cells. Acts as an enhancer of polarization of alternatively activated macrophages. Acts as a chemoattractant for Th2 cells, and may function as an 'alarmin', that amplifies immune responses during tissue injury. Induces rapid UCP2-dependent mitochondrial rewiring that attenuates the generation of reactive oxygen species and preserves the integrity of Krebs cycle required for persistent production of itaconate and subsequent GATA3-dependent differentiation of inflammation-resolving alternatively activated macrophages. Functionally, in quiescent endothelia the uncleaved form is constitutively and abundantly expressed, and acts as a chromatin-associated nuclear factor with transcriptional repressor properties, it may sequester nuclear NF-kappaB/RELA, lowering expression of its targets. This form is rapidely lost upon angiogenic or pro-inflammatory activation. The polypeptide is Interleukin-33 (Mus musculus (Mouse)).